The following is a 380-amino-acid chain: Cytochrome b (380 aa).

4 helical membrane-spanning segments follow: residues 33–53 (FGSL…FLAM), 77–98 (WLIR…YLHI), 113–133 (WNVG…GYVL), and 178–198 (FFAF…IHLL). His-83 and His-97 together coordinate heme b. Heme b-binding residues include His-182 and His-196. His-201 provides a ligand contact to a ubiquinone. 4 helical membrane passes run 226–246 (YKDL…ALFS), 288–308 (LGGV…PILH), 320–340 (ITQF…WIGG), and 347–367 (FIII…VLTP).

Belongs to the cytochrome b family. In terms of assembly, the cytochrome bc1 complex contains 3 respiratory subunits (MT-CYB, CYC1 and UQCRFS1), 2 core proteins (UQCRC1 and UQCRC2) and probably 6 low-molecular weight proteins. Heme b is required as a cofactor.

The protein localises to the mitochondrion inner membrane. In terms of biological role, component of the ubiquinol-cytochrome c reductase complex (complex III or cytochrome b-c1 complex) that is part of the mitochondrial respiratory chain. The b-c1 complex mediates electron transfer from ubiquinol to cytochrome c. Contributes to the generation of a proton gradient across the mitochondrial membrane that is then used for ATP synthesis. The protein is Cytochrome b (mt-cyb) of Dactyloptena peterseni (Starry flying gurnard).